The following is a 268-amino-acid chain: Regulation of nuclear pre-mRNA domain-containing protein 1A (268 aa).

In terms of domain architecture, CID spans 1-133; the sequence is MSAFSEAALE…QLRQALYGDR (133 aa).

Belongs to the UPF0400 (RTT103) family. May form a heterodimer with RPRD1B. Associates with the RNA polymerase II subunit POLR2A (via CTD phosphorylated at 'Ser-2' and 'Ser-7' of the heptad repeats).

The protein localises to the nucleus. In terms of biological role, interacts with phosphorylated C-terminal heptapeptide repeat domain (CTD) of the largest RNA polymerase II subunit POLR2A, and participates in dephosphorylation of the CTD by RPAP2. May act as a negative regulator of cyclin-D1 (CCND1) and cyclin-E (CCNE1) in the cell cycle. The chain is Regulation of nuclear pre-mRNA domain-containing protein 1A (RPRD1A) from Gallus gallus (Chicken).